Reading from the N-terminus, the 233-residue chain is MNKILLQCDNLCKRYQEGSVQTDVLHNVSFSVGEGEMMAIVGSSGSGKSTLLHLLGGLDTPTSGDVIFNGQPMSKLSSAAKAELRNQKLGFIYQFHHLLPDFTALENVAMPLLIGKKKPAEINSRALEMLKAVGLDHRANHRPSELSGGERQRVAIARALVNNPRLVLADEPTGNLDARNADSIFQLLGELNRLQGTAFLVVTHDLQLAKRMSRQLEMRDGRLTAELSLMGAE.

Residues 6 to 233 (LQCDNLCKRY…TAELSLMGAE (228 aa)) form the ABC transporter domain. 42–49 (GSSGSGKS) serves as a coordination point for ATP.

Belongs to the ABC transporter superfamily. Lipoprotein translocase (TC 3.A.1.125) family. The complex is composed of two ATP-binding proteins (LolD) and two transmembrane proteins (LolC and LolE).

The protein localises to the cell inner membrane. In terms of biological role, part of the ABC transporter complex LolCDE involved in the translocation of mature outer membrane-directed lipoproteins, from the inner membrane to the periplasmic chaperone, LolA. Responsible for the formation of the LolA-lipoprotein complex in an ATP-dependent manner. Such a release is dependent of the sorting-signal (absence of an Asp at position 2 of the mature lipoprotein) and of LolA. The sequence is that of Lipoprotein-releasing system ATP-binding protein LolD from Escherichia coli (strain K12).